Consider the following 882-residue polypeptide: Alanine--tRNA ligase (882 aa).

Residues H574, H578, C682, and H686 each coordinate Zn(2+). The disordered stretch occupies residues 853-882 (GGRGGGKGALAQGGGLDPRKAREALPGLLP). Residues 854 to 868 (GRGGGKGALAQGGGL) show a composition bias toward gly residues.

The protein belongs to the class-II aminoacyl-tRNA synthetase family. Zn(2+) is required as a cofactor.

Its subcellular location is the cytoplasm. The enzyme catalyses tRNA(Ala) + L-alanine + ATP = L-alanyl-tRNA(Ala) + AMP + diphosphate. Catalyzes the attachment of alanine to tRNA(Ala) in a two-step reaction: alanine is first activated by ATP to form Ala-AMP and then transferred to the acceptor end of tRNA(Ala). Also edits incorrectly charged Ser-tRNA(Ala) and Gly-tRNA(Ala) via its editing domain. The chain is Alanine--tRNA ligase from Thermus thermophilus (strain ATCC 27634 / DSM 579 / HB8).